A 235-amino-acid chain; its full sequence is Lipoprotein signal peptidase (235 aa).

The disordered stretch occupies residues 1–23 (MTDETSGPAEPVTDAPGDAESPA). 3 helical membrane passes run 31-51 (LLLT…VLAV), 84-104 (GYTW…IWMG), and 108-128 (VSPW…GNLV). Active-site residues include Asp144 and Asp158. Residues 156–176 (VADPSVVGGAILLVALSLFGF) form a helical membrane-spanning segment. Residues 185–235 (RPGEDAEPSAGASDSTPEAPAADGPDKPAGPVGPEDAAEESKTVGHQAEPS) form a disordered region. Positions 201–218 (PEAPAADGPDKPAGPVGP) are enriched in low complexity.

It belongs to the peptidase A8 family.

The protein resides in the cell membrane. The catalysed reaction is Release of signal peptides from bacterial membrane prolipoproteins. Hydrolyzes -Xaa-Yaa-Zaa-|-(S,diacylglyceryl)Cys-, in which Xaa is hydrophobic (preferably Leu), and Yaa (Ala or Ser) and Zaa (Gly or Ala) have small, neutral side chains.. It participates in protein modification; lipoprotein biosynthesis (signal peptide cleavage). In terms of biological role, this protein specifically catalyzes the removal of signal peptides from prolipoproteins. In Mycolicibacterium smegmatis (strain ATCC 700084 / mc(2)155) (Mycobacterium smegmatis), this protein is Lipoprotein signal peptidase.